The chain runs to 463 residues: T-box transcription factor TBX1 (463 aa).

2 disordered regions span residues 39–58 and 75–103; these read SPSPGDPYSQHEPHYEPCSA and GASSSSCASSTPGSGSTGSSGSSKAPVKK. Residues 75-97 are compositionally biased toward low complexity; sequence GASSSSCASSTPGSGSTGSSGSS. The segment at residues 119–297 is a DNA-binding region (T-box); that stretch reads LWDEFNQLGT…SNPFAKGFRD (179 aa). Disordered regions lie at residues 320 to 354 and 367 to 405; these read RSRNPVSSPPQNGSDKDGDGRREYERDTSGTPLHG and SPSLPVPGGLVPLSTGRPSPPHELRLDPHSQGSEPLHHH. Positions 323-332 are enriched in polar residues; sequence NPVSSPPQNG. The segment covering 333–347 has biased composition (basic and acidic residues); that stretch reads SDKDGDGRREYERDT. Positions 367-380 are enriched in low complexity; it reads SPSLPVPGGLVPLS. Positions 420–431 match the Nuclear localization signal motif; it reads KTRPAPYPLPSI.

As to quaternary structure, binds DNA as a dimer. Interacts with dscr6/ripply3.

Its subcellular location is the nucleus. Functionally, probable transcriptional regulator involved in developmental processes. Binds to the palindromic T site 5'-TTCACACCTAGGTGTGAA-3' DNA sequence. Induces pre-placodal ectoderm (PPE) gene expression in regions where RIPPLY3 is absent. Plays a role in the formation of the anteroposterior (AP) axis during embryonic development; required to establish the posterolateral border of the pre-placodal ectoderm (PPE) acting downstream of the retinoic acid receptor (RAR) signaling. The chain is T-box transcription factor TBX1 (tbx1) from Xenopus tropicalis (Western clawed frog).